Reading from the N-terminus, the 603-residue chain is UvrABC system protein C (603 aa).

The 78-residue stretch at 15 to 92 (DKPGCYLMKN…IQKHQPYFNI (78 aa)) folds into the GIY-YIG domain. The UVR domain occupies 197 to 232 (ATVKRQLTKKMQRAAENMEFERAAEIRDQLHYIEVT).

Belongs to the UvrC family. Interacts with UvrB in an incision complex.

The protein localises to the cytoplasm. Its function is as follows. The UvrABC repair system catalyzes the recognition and processing of DNA lesions. UvrC both incises the 5' and 3' sides of the lesion. The N-terminal half is responsible for the 3' incision and the C-terminal half is responsible for the 5' incision. The polypeptide is UvrABC system protein C (Limosilactobacillus reuteri (strain DSM 20016) (Lactobacillus reuteri)).